Here is a 160-residue protein sequence, read N- to C-terminus: MGTLDTKGFTEEQEALVVKSWNAMKKNSAELGLKLFLKIFEIAPSAQKLFSFLKDSKVPLEQNTKLKPHAMSVFLMTCESAVQLRKSGKVTVRESSLKKLGANHFKYGVVDEHFEVTKFALLETIKEAVPEMWSPAMKNAWGEAYDQLVNAIKSEMKPSS.

A Globin domain is found at 8-157 (GFTEEQEALV…LVNAIKSEMK (150 aa)). The Homodimerization motif lies at 41–45 (EIAPS). Heme b is bound by residues Ser51, Lys65, His69, Lys99, and His104. Positions 111 to 123 (DEHFEVTKFALLE) match the Homodimerization motif.

This sequence belongs to the plant globin family. Homodimer. The cofactor is heme b. As to expression, root specific.

The protein localises to the nucleus matrix. Its subcellular location is the cytoplasm. It catalyses the reaction Fe(III)-heme b-[protein] + nitric oxide + H2O = Fe(II)-heme b-[protein] + nitrite + 2 H(+). Its function is as follows. Phytoglobin that reduces nitrite to nitric oxide (NO) under anoxic conditions (e.g. during flooding or in waterlogged soil) and upon root nodulation. Required for general plant development and during nodulation, especially for the onset of symbiosis. Monitors nitric oxide (NO) levels during early phase of the nitrogen-fixing symbiosis and buffers oxygen in functioning nodules. May not function as an oxygen storage or transport protein. Has an unusually high affinity for O(2) through a hexacoordinate heme iron because of a very low dissociation constant. This chain is Anaerobic nitrite reductase MHB1, found in Medicago sativa (Alfalfa).